Reading from the N-terminus, the 276-residue chain is Large ribosomal subunit protein uL2 (276 aa).

Residues 222–276 (GVAMNPIDHPLGGGEGRSSGGRHPVSPWGMPTKGYKTRDRKKASSKLIIKRRGQK) form a disordered region. Residues 259–276 (RDRKKASSKLIIKRRGQK) are compositionally biased toward basic residues.

This sequence belongs to the universal ribosomal protein uL2 family. As to quaternary structure, part of the 50S ribosomal subunit. Forms a bridge to the 30S subunit in the 70S ribosome.

Its function is as follows. One of the primary rRNA binding proteins. Required for association of the 30S and 50S subunits to form the 70S ribosome, for tRNA binding and peptide bond formation. It has been suggested to have peptidyltransferase activity; this is somewhat controversial. Makes several contacts with the 16S rRNA in the 70S ribosome. The polypeptide is Large ribosomal subunit protein uL2 (Nitratidesulfovibrio vulgaris (strain ATCC 29579 / DSM 644 / CCUG 34227 / NCIMB 8303 / VKM B-1760 / Hildenborough) (Desulfovibrio vulgaris)).